Here is a 1934-residue protein sequence, read N- to C-terminus: Myosin-7 (1934 aa).

Residues 31–80 (DLKKDVFVPDDKEEFVKAKIVSREGGKVTAETENGKTVTVKEDQVMQQNP) enclose the Myosin N-terminal SH3-like domain. The 694-residue stretch at 84–777 (DKIEDMAMLT…LLGLLEEMRD (694 aa)) folds into the Myosin motor domain. Lys-128 is subject to N6,N6,N6-trimethyllysine. Residue 177–184 (GESGAGKT) coordinates ATP. The residue at position 377 (Thr-377) is a Phosphothreonine. 2 actin-binding regions span residues 654–676 (LNKL…IPNE) and 756–770 (KFGH…GLLG). Positions 780-809 (LSRIITRIQAQSRGLLSRMEFKKLLERRDS) constitute an IQ domain. Residues 839–1934 (LKSAETEKEM…DIGAKGLNEE (1096 aa)) are a coiled coil. Phosphoserine occurs at positions 1136 and 1268. A Phosphothreonine modification is found at Thr-1281. A Phosphotyrosine modification is found at Tyr-1307. Thr-1308 carries the phosphothreonine modification. Ser-1509 bears the Phosphoserine mark. Residue Thr-1512 is modified to Phosphothreonine. Residues 1914–1934 (SQVNKLRAKSRDIGAKGLNEE) form a disordered region. Over residues 1922 to 1934 (KSRDIGAKGLNEE) the composition is skewed to basic and acidic residues.

Belongs to the TRAFAC class myosin-kinesin ATPase superfamily. Myosin family. As to quaternary structure, muscle myosin is a hexameric protein that consists of 2 heavy chain subunits (MHC), 2 alkali light chain subunits (MLC) and 2 regulatory light chain subunits (MLC-2). Interacts with ECPAS. Interacts (via C-terminus) with LRRC39.

It is found in the cytoplasm. The protein resides in the myofibril. The protein localises to the sarcomere. Myosins are actin-based motor molecules with ATPase activity essential for muscle contraction. Forms regular bipolar thick filaments that, together with actin thin filaments, constitute the fundamental contractile unit of skeletal and cardiac muscle. This is Myosin-7 (MYH7) from Mesocricetus auratus (Golden hamster).